The following is a 362-amino-acid chain: Probable protein phosphatase 2C 11 (362 aa).

In terms of domain architecture, PPM-type phosphatase spans 23 to 329 (KLGLSSMQGW…DNMTMVLVQF (307 aa)). Residues Asp57, Gly58, Asp272, and Asp320 each contribute to the Mn(2+) site.

Belongs to the PP2C family. Mg(2+) serves as cofactor. The cofactor is Mn(2+).

The catalysed reaction is O-phospho-L-seryl-[protein] + H2O = L-seryl-[protein] + phosphate. It carries out the reaction O-phospho-L-threonyl-[protein] + H2O = L-threonyl-[protein] + phosphate. The protein is Probable protein phosphatase 2C 11 of Oryza sativa subsp. japonica (Rice).